A 333-amino-acid polypeptide reads, in one-letter code: uncharacterized protein (333 aa).

This sequence belongs to the polysaccharide synthase family.

This is an uncharacterized protein from Methanocaldococcus jannaschii (strain ATCC 43067 / DSM 2661 / JAL-1 / JCM 10045 / NBRC 100440) (Methanococcus jannaschii).